The following is a 1280-amino-acid chain: Multidrug resistance protein 1 (1280 aa).

The Cytoplasmic portion of the chain corresponds to 1–72 (MSRAHAAYAN…YADATDRVLM (72 aa)). The ABC transmembrane type-1 1 domain maps to 72–357 (MIAGTAFAVA…VAPSRTAFTE (286 aa)). 6 consecutive transmembrane segments (helical) span residues 73–93 (IAGTAFAVACGAGMPVFSFIF), 120–140 (YVGIAMLIACAGHVMCWTVAA), 189–209 (KLSQGIMNGSMGVIGYIAGFV), 216–236 (LMMIGMMPFIIVMAAIIGSIV), 297–317 (LSAAVIMALMYVSYTVAFFFG), and 326–345 (RDMADIISTFLAVLMGSFGL). Residues 346 to 712 (GFVAPSRTAF…MRMNKDKAWA (367 aa)) lie on the Cytoplasmic side of the membrane. In terms of domain architecture, ABC transporter 1 spans 391–634 (IEFRNVRFAY…DGEFAAVAKM (244 aa)). An ATP-binding site is contributed by 426–433 (GASGCGKS). A run of 6 helical transmembrane segments spans residues 713–733 (VALGILSSVVIGSARPASSIV), 762–781 (PLFIVFAVANFSGWILHGFY), 837–857 (IGLKVQTMCIIASGLVVGFIY), 858–878 (QWKLALVALACMPLMIGCSLT), 938–958 (IIAGGIYGITQFIFYGVYALC), and 976–996 (VMIASMSILFGAQNAGEAGAF). Positions 713–1002 (VALGILSSVV…AGAFATKLAD (290 aa)) constitute an ABC transmembrane type-1 2 domain. Positions 1036–1274 (IEYRNVQFIY…GGEYKTRYDL (239 aa)) constitute an ABC transporter 2 domain. ATP is bound at residue 1071 to 1078 (GQTGCGKS). N-linked (GlcNAc...) asparagine glycosylation is present at Asn1113.

Belongs to the ABC transporter superfamily. ABCB family. Multidrug resistance exporter (TC 3.A.1.201) subfamily.

It localises to the membrane. It carries out the reaction ATP + H2O + xenobioticSide 1 = ADP + phosphate + xenobioticSide 2.. Functionally, energy-dependent efflux pump responsible for decreased drug accumulation in multi-drug-resistant cells. Confers vinblastine resistance. This chain is Multidrug resistance protein 1 (MDR1), found in Leishmania enriettii.